Here is a 362-residue protein sequence, read N- to C-terminus: NAD(P)H-quinone oxidoreductase subunit 1, chloroplastic (362 aa).

8 helical membrane-spanning segments follow: residues 29–49 (ILPI…IVWL), 103–123 (IAVI…HFVL), 128–148 (IGVF…LMAG), 164–184 (AAQS…ISLL), 202–222 (FFGW…ISSL), 247–267 (YSGI…LVSS), 303–323 (TMGI…SITI), and 335–355 (LLNL…LLTT).

Belongs to the complex I subunit 1 family. In terms of assembly, NDH is composed of at least 16 different subunits, 5 of which are encoded in the nucleus.

Its subcellular location is the plastid. It is found in the chloroplast thylakoid membrane. The enzyme catalyses a plastoquinone + NADH + (n+1) H(+)(in) = a plastoquinol + NAD(+) + n H(+)(out). It catalyses the reaction a plastoquinone + NADPH + (n+1) H(+)(in) = a plastoquinol + NADP(+) + n H(+)(out). Functionally, NDH shuttles electrons from NAD(P)H:plastoquinone, via FMN and iron-sulfur (Fe-S) centers, to quinones in the photosynthetic chain and possibly in a chloroplast respiratory chain. The immediate electron acceptor for the enzyme in this species is believed to be plastoquinone. Couples the redox reaction to proton translocation, and thus conserves the redox energy in a proton gradient. In Triticum aestivum (Wheat), this protein is NAD(P)H-quinone oxidoreductase subunit 1, chloroplastic.